We begin with the raw amino-acid sequence, 246 residues long: tRNA (guanine-N(1)-)-methyltransferase (246 aa).

Residues glycine 114 and 134 to 139 each bind S-adenosyl-L-methionine; that span reads IGDYIL.

It belongs to the RNA methyltransferase TrmD family. In terms of assembly, homodimer.

It is found in the cytoplasm. The enzyme catalyses guanosine(37) in tRNA + S-adenosyl-L-methionine = N(1)-methylguanosine(37) in tRNA + S-adenosyl-L-homocysteine + H(+). In terms of biological role, specifically methylates guanosine-37 in various tRNAs. The polypeptide is tRNA (guanine-N(1)-)-methyltransferase (Coxiella burnetii (strain CbuK_Q154) (Coxiella burnetii (strain Q154))).